Reading from the N-terminus, the 121-residue chain is MQYLFIFLGGAVGALLRYLLSFINTSFEMPIGTFIANLCGAFLMGFLGTLAIQYFNNSPMLKKGITTGFIGSLTTFSTFQFELVQFFESGSFILLIVYALTSYIFGILLCFLGVRLGAKIS.

4 helical membrane-spanning segments follow: residues 3–23 (YLFI…LSFI), 31–51 (IGTF…GTLA), 64–84 (GITT…FELV), and 92–112 (FILL…LCFL). The Na(+) site is built by Gly-71 and Thr-74.

It belongs to the fluoride channel Fluc/FEX (TC 1.A.43) family.

Its subcellular location is the cell membrane. It catalyses the reaction fluoride(in) = fluoride(out). Its activity is regulated as follows. Na(+) is not transported, but it plays an essential structural role and its presence is essential for fluoride channel function. Functionally, fluoride-specific ion channel. Important for reducing fluoride concentration in the cell, thus reducing its toxicity. This chain is Fluoride-specific ion channel FluC 2, found in Staphylococcus saprophyticus subsp. saprophyticus (strain ATCC 15305 / DSM 20229 / NCIMB 8711 / NCTC 7292 / S-41).